The sequence spans 265 residues: Sulfur carrier protein FdhD (265 aa).

Cys107 functions as the Cysteine persulfide intermediate in the catalytic mechanism.

The protein belongs to the FdhD family.

The protein localises to the cytoplasm. In terms of biological role, required for formate dehydrogenase (FDH) activity. Acts as a sulfur carrier protein that transfers sulfur from IscS to the molybdenum cofactor prior to its insertion into FDH. This Staphylococcus aureus (strain MRSA252) protein is Sulfur carrier protein FdhD.